Here is a 401-residue protein sequence, read N- to C-terminus: Capsid protein alpha (401 aa).

Residues 1–16 (MVSRTKNRRNKARKVV) show a composition bias toward basic residues. The interval 1–43 (MVSRTKNRRNKARKVVSRSTALVPMAPASQRTGPAPRKPRKRN) is disordered. A disulfide bridge links cysteine 62 with cysteine 316. Aspartate 68 is a catalytic residue. Residues aspartate 249, glutamate 251, and alanine 272 each contribute to the Ca(2+) site.

The protein belongs to the peptidase A6 family. Capsid protein alpha autocatalytically maturates into capsid protein beta and peptide gamma.

It is found in the virion. It catalyses the reaction Hydrolysis of an asparaginyl bond involved in the maturation of the structural protein of the virus, typically -Asn-|-Ala- or -Asn-|-Phe-.. In terms of biological role, capsid protein alpha self-assembles to form an icosahedral procapsid with a T=3 symmetry, about 30 nm in diameter, and consisting of 60 capsid proteins trimers. In addition, 240 calcium ions are incorporated per capsid during assembly. The capsid encapsulates the two genomic RNAs. Capsid maturation occurs via autoproteolytic cleavage of capsid protein alpha generating capsid protein beta and the membrane-active peptide gamma. Membrane-permeabilizing peptide produced by virus maturation, thereby creating the infectious virion. After endocytosis into the host cell, peptide gamma is probably exposed in endosomes, where it permeabilizes the endosomal membrane, facilitating translocation of viral capsid or RNA into the cytoplasm. Involved in specific recognition and packaging of viral RNA during assembly. The chain is Capsid protein alpha (alpha) from Spodoptera eridania (Southern armyworm).